Consider the following 726-residue polypeptide: ORC ubiquitin ligase 1 (726 aa).

Residues 18–56 (CHICLGKVRQPVICINNHVFCSICIDLWLKNNSQCPACR) form an RING-type; degenerate zinc finger. 2 coiled-coil regions span residues 87 to 129 (LRKT…TILD) and 155 to 270 (ETVA…MNSI). Residue Ser210 is modified to Phosphoserine. The interval 274–335 (ALPADGKGSK…ARQESTSKAE (62 aa)) is disordered. Over residues 280 to 290 (KGSKGSEEDVA) the composition is skewed to basic and acidic residues. The span at 300–320 (KQPSSSTSSSSHLAKPSSSRL) shows a compositional bias: low complexity. The span at 321–334 (CDTSSARQESTSKA) shows a compositional bias: polar residues. 7 positions are modified to phosphoserine: Ser526, Ser553, Ser561, Ser568, Ser570, Ser719, and Ser721. The disordered stretch occupies residues 687–726 (QSPWSTSFVPEKRNKNVNQSTKRKIQSSLSNASPSKATKS). Residues 702 to 726 (NVNQSTKRKIQSSLSNASPSKATKS) show a composition bias toward polar residues.

In terms of assembly, associates with ORC complex. Binds to chromatin; association is cell cycle-regulated, absent from mitotic chromosomes, is associated with chromatin from G1 and partially released from chromatin from mid S-phase. Auto-ubiquitinated.

It localises to the chromosome. The enzyme catalyses S-ubiquitinyl-[E2 ubiquitin-conjugating enzyme]-L-cysteine + [acceptor protein]-L-lysine = [E2 ubiquitin-conjugating enzyme]-L-cysteine + N(6)-ubiquitinyl-[acceptor protein]-L-lysine.. E3 ubiquitin ligase essential for DNA replication origin activation during S phase. Acts as a replication origin selector which selects the origins to be fired and catalyzes the multi-mono-ubiquitination of a subset of chromatin-bound ORC3 and ORC5 during S-phase. The protein is ORC ubiquitin ligase 1 (OBI1) of Pongo abelii (Sumatran orangutan).